A 354-amino-acid chain; its full sequence is uncharacterized protein (354 aa).

A helical transmembrane segment spans residues 43-63 (LIAVTLWSCVGSLLFICLLAV).

It localises to the cell membrane. This is an uncharacterized protein from Bacillus subtilis (strain 168).